A 343-amino-acid chain; its full sequence is Hydroxymethylglutaryl-CoA synthase (343 aa).

Aspartate 28 and alanine 29 together coordinate (3S)-3-hydroxy-3-methylglutaryl-CoA. The Proton donor/acceptor role is filled by glutamate 80. Residue cysteine 112 participates in (3S)-3-hydroxy-3-methylglutaryl-CoA binding. Cysteine 112 serves as the catalytic Acyl-thioester intermediate. Position 198 (arginine 198) interacts with CoA. (3S)-3-hydroxy-3-methylglutaryl-CoA is bound by residues threonine 200 and histidine 233. The Proton donor/acceptor role is filled by histidine 233. Residue lysine 238 coordinates CoA. Positions 242, 265, and 295 each coordinate (3S)-3-hydroxy-3-methylglutaryl-CoA.

Belongs to the thiolase-like superfamily. Archaeal HMG-CoA synthase family. As to quaternary structure, interacts with acetoacetyl-CoA thiolase that catalyzes the precedent step in the pathway and with a DUF35 protein. The acetoacetyl-CoA thiolase/HMG-CoA synthase complex channels the intermediate via a fused CoA-binding site, which allows for efficient coupling of the endergonic thiolase reaction with the exergonic HMGCS reaction.

The enzyme catalyses acetoacetyl-CoA + acetyl-CoA + H2O = (3S)-3-hydroxy-3-methylglutaryl-CoA + CoA + H(+). The protein operates within metabolic intermediate biosynthesis; (R)-mevalonate biosynthesis; (R)-mevalonate from acetyl-CoA: step 2/3. Functionally, catalyzes the condensation of acetyl-CoA with acetoacetyl-CoA to form 3-hydroxy-3-methylglutaryl-CoA (HMG-CoA). Functions in the mevalonate (MVA) pathway leading to isopentenyl diphosphate (IPP), a key precursor for the biosynthesis of isoprenoid compounds that are building blocks of archaeal membrane lipids. The sequence is that of Hydroxymethylglutaryl-CoA synthase from Archaeoglobus fulgidus (strain ATCC 49558 / DSM 4304 / JCM 9628 / NBRC 100126 / VC-16).